Reading from the N-terminus, the 258-residue chain is Peptidase inhibitor 15 (258 aa).

The first 21 residues, 1–21 (MIEMISISAAFLLSLLCETCG), serve as a signal peptide directing secretion. The propeptide occupies 22-60 (LVLPKSSDLAIAASNYTIIKPDLSARLDPVKAPKARRKR). Asn36 and Asn124 each carry an N-linked (GlcNAc...) asparagine glycan. Residues 71-211 (VEYHNQVRGK…RRAVYLVCNY (141 aa)) form the SCP domain.

It belongs to the CRISP family.

Its subcellular location is the secreted. Serine protease inhibitor which displays weak inhibitory activity against trypsin. May be involved in facial patterning during embryonic development. This chain is Peptidase inhibitor 15 (pi15), found in Xenopus laevis (African clawed frog).